Consider the following 310-residue polypeptide: CCR4-NOT transcription complex subunit 7 (310 aa).

Positions 51, 53, 172, and 245 each coordinate a divalent metal cation.

This sequence belongs to the CAF1 family. As to quaternary structure, component of the CCR4-NOT complex at least composed of ccf-1, ccr-4 and let-711, which is required for germ cell development in hermaphrodites. Within the complex interacts with let-711. Highly expressed in the germline. In particular, highly expressed in germ cells that enter meiosis and progress through the pachytene stage.

The protein resides in the nucleus. Its subcellular location is the cytoplasm. It catalyses the reaction Exonucleolytic cleavage of poly(A) to 5'-AMP.. In terms of biological role, catalytic component of the CCR4-NOT complex which is one of the major cellular mRNA deadenylases and is linked to various cellular processes including bulk mRNA degradation, miRNA-mediated repression, translational repression during translational initiation and general transcription regulation. Within the complex, plays a role in miRNA-mediated deadenylation in embryos. Within the complex promotes germ cell development and fertility in hermaphrodites. Additional complex functions may be a consequence of its influence on mRNA expression. This Caenorhabditis elegans protein is CCR4-NOT transcription complex subunit 7.